The sequence spans 255 residues: MSSIGTGYDLSASTFSPDGRVFQVEYAMKAVENSSTAIGIRCKDGVVFGVEKLVLSKLYEEGSNKRLFNVDRHVGMAVAGLLADARSLADIAREEASNFRSNFGYNIPLKHLADRVAMYVHAYTLYSAVRPFGCSFMLGSYSVNDGAQLYMIDPSGVSYGYWGCAIGKARQAAKTEIEKLQMKEMTCRDIVKEVAKIIYIVHDEVKDKAFELELSWVGELTNGRHEIVPKDIREEAEKYAKESLKEEDESDDDNM.

Position 2 is an N-acetylserine (S2). N6-acetyllysine is present on residues K57, K206, and K230. A phosphoserine mark is found at S243 and S250.

It belongs to the peptidase T1A family. The 26S proteasome consists of a 20S proteasome core and two 19S regulatory subunits. The 20S proteasome core is a barrel-shaped complex made of 28 subunits that are arranged in four stacked rings. The two outer rings are each formed by seven alpha subunits, and the two inner rings are formed by seven beta subunits. The proteolytic activity is exerted by three beta-subunits PSMB5, PSMB6 and PSMB7. Interacts with AURKB. Interacts with CDKN1A. Interacts with MDM2 and RB1. Interacts with the C-terminus of TBXA2R isoform 2. Interacts with DNAJB2. As to quaternary structure, (Microbial infection) Interacts with HIV-1 Tat protein. In terms of assembly, (Microbial infection) Interacts with hepatitis C virus (HCV) F protein. (Microbial infection) Interacts with Epstein-Barr virus EBNA3 proteins.

Its subcellular location is the cytoplasm. The protein localises to the nucleus. Component of the 20S core proteasome complex involved in the proteolytic degradation of most intracellular proteins. This complex plays numerous essential roles within the cell by associating with different regulatory particles. Associated with two 19S regulatory particles, forms the 26S proteasome and thus participates in the ATP-dependent degradation of ubiquitinated proteins. The 26S proteasome plays a key role in the maintenance of protein homeostasis by removing misfolded or damaged proteins that could impair cellular functions, and by removing proteins whose functions are no longer required. Associated with the PA200 or PA28, the 20S proteasome mediates ubiquitin-independent protein degradation. This type of proteolysis is required in several pathways including spermatogenesis (20S-PA200 complex) or generation of a subset of MHC class I-presented antigenic peptides (20S-PA28 complex). Binds to the C-terminus of CDKN1A and thereby mediates its degradation. Negatively regulates the membrane trafficking of the cell-surface thromboxane A2 receptor (TBXA2R) isoform 2. This Homo sapiens (Human) protein is Proteasome subunit alpha type-3.